A 310-amino-acid polypeptide reads, in one-letter code: N-acetyl-gamma-glutamyl-phosphate reductase (310 aa).

Residue Cys117 is part of the active site.

This sequence belongs to the NAGSA dehydrogenase family. Type 2 subfamily.

It localises to the cytoplasm. It carries out the reaction N-acetyl-L-glutamate 5-semialdehyde + phosphate + NADP(+) = N-acetyl-L-glutamyl 5-phosphate + NADPH + H(+). It functions in the pathway amino-acid biosynthesis; L-arginine biosynthesis; N(2)-acetyl-L-ornithine from L-glutamate: step 3/4. Catalyzes the NADPH-dependent reduction of N-acetyl-5-glutamyl phosphate to yield N-acetyl-L-glutamate 5-semialdehyde. This is N-acetyl-gamma-glutamyl-phosphate reductase from Sinorhizobium medicae (strain WSM419) (Ensifer medicae).